The following is a 295-amino-acid chain: Putative nudix hydrolase 7 (295 aa).

The 174-residue stretch at 9 to 182 (SWRSAASIIL…KYALPPPQVY (174 aa)) folds into the Nudix hydrolase domain. The short motif at 52–73 (TDAKLGDEFRIAAVRELFEESG) is the Nudix box element. Positions 67 and 71 each coordinate Mg(2+).

It belongs to the Nudix hydrolase family. It depends on Mg(2+) as a cofactor. Mn(2+) is required as a cofactor.

Its function is as follows. Probably mediates the hydrolysis of some nucleoside diphosphate derivatives. The chain is Putative nudix hydrolase 7 (ndx-7) from Caenorhabditis elegans.